The sequence spans 315 residues: Methionyl-tRNA formyltransferase (315 aa).

111 to 114 (SLLP) is a (6S)-5,6,7,8-tetrahydrofolate binding site.

This sequence belongs to the Fmt family.

It carries out the reaction L-methionyl-tRNA(fMet) + (6R)-10-formyltetrahydrofolate = N-formyl-L-methionyl-tRNA(fMet) + (6S)-5,6,7,8-tetrahydrofolate + H(+). Attaches a formyl group to the free amino group of methionyl-tRNA(fMet). The formyl group appears to play a dual role in the initiator identity of N-formylmethionyl-tRNA by promoting its recognition by IF2 and preventing the misappropriation of this tRNA by the elongation apparatus. The polypeptide is Methionyl-tRNA formyltransferase (Chlorobium phaeobacteroides (strain DSM 266 / SMG 266 / 2430)).